The sequence spans 122 residues: WUSCHEL-related homeobox 7 (122 aa).

Residues 25–89 (AKCGRWNPTV…NHKARERQKC (65 aa)) constitute a DNA-binding region (homeobox; WUS-type). Basic and acidic residues predominate over residues 98–111 (DHRQDTDLSKPRRD). The interval 98-122 (DHRQDTDLSKPRRDNVRRHQLPAKG) is disordered. Over residues 112–122 (NVRRHQLPAKG) the composition is skewed to basic residues.

The protein belongs to the WUS homeobox family.

The protein localises to the nucleus. Potential transcription factor that plays a central role during developmental processes. In Arabidopsis thaliana (Mouse-ear cress), this protein is WUSCHEL-related homeobox 7 (WOX7).